Here is a 285-residue protein sequence, read N- to C-terminus: NADH-dependent oxidoreductase ucdB (285 aa).

T87 provides a ligand contact to NAD(+). K156 is an active-site residue.

It belongs to the HIBADH-related family. NP60 subfamily.

It participates in secondary metabolite biosynthesis. Nonribosomal peptide synthetase that mediates the biosynthesis of usterphenyllins and uscandidusins, p-terphenyl derivatives. Within the pathway, ucdB alone catalyzes both reduction and dehydration of atromentin to form a terphenyl triol intermediate. The pathway begin with the biosynthesis of 4-hydroxyphenylpyruvate (HPPA) from L-tyrosine, possibly by the aminotransferase ucdG. The nonribosomal peptide synthetase ucdA then condenses two HPPA units to produce atromentin. The key step in this pathway is the reduction and dehydration of atromentin to form a terphenyl triol intermediate, performed by the NAD-dependent dehydrogenase ucdB. Further O-methylation by the methyltransferase ucdC forms terphenyllin carrying two methoxy moieties at C-9 and C-12, and subsequent dihydroxylation at C-3 of ring A and C-15 of ring C by the flavin-dependent oxygenase ucdD leads to 3,15-dihydroxyterphenyllin. Prenylation by ucdE at position C-5 of ring A forms usterphenyllin B, and is followed by a second prenylation at position C-14 of ring C to form usterphenyllin A. The following furan ring formation that leads to uscandidusins A and B was proven to be an unexpected spontaneous non-enzymatic reaction. The protein is NADH-dependent oxidoreductase ucdB of Aspergillus ustus.